Here is a 146-residue protein sequence, read N- to C-terminus: 3-hydroxyacyl-[acyl-carrier-protein] dehydratase FabZ (146 aa).

The active site involves His-49.

The protein belongs to the thioester dehydratase family. FabZ subfamily.

The protein localises to the cytoplasm. The enzyme catalyses a (3R)-hydroxyacyl-[ACP] = a (2E)-enoyl-[ACP] + H2O. In terms of biological role, involved in unsaturated fatty acids biosynthesis. Catalyzes the dehydration of short chain beta-hydroxyacyl-ACPs and long chain saturated and unsaturated beta-hydroxyacyl-ACPs. In Ectopseudomonas mendocina (strain ymp) (Pseudomonas mendocina), this protein is 3-hydroxyacyl-[acyl-carrier-protein] dehydratase FabZ.